A 198-amino-acid polypeptide reads, in one-letter code: MEHFISLFVRAVFIENMALAFFLGMCTFLAVSKNVTTAFGLGIAVTVVLGISVPANNLVYNLVLRDGALVEGVDLSFLNFITFIGVIAALVQILEMILDRYFPSLYNALGIFLPLITVNCAIFGGVSFMAQRDYNFSESIVYGFGSGIGWMLAIVLLASIREKMKYADVPAGLKGLGITFVTTGLMALGFMSFSGVQL.

6 helical membrane-spanning segments follow: residues 11–31 (AVFI…FLAV), 35–55 (VTTA…SVPA), 77–97 (FLNF…LEMI), 109–129 (LGIF…VSFM), 140–160 (IVYG…LASI), and 176–196 (LGIT…FSGV).

The protein belongs to the NqrDE/RnfAE family. Composed of six subunits; NqrA, NqrB, NqrC, NqrD, NqrE and NqrF.

It is found in the cell inner membrane. It carries out the reaction a ubiquinone + n Na(+)(in) + NADH + H(+) = a ubiquinol + n Na(+)(out) + NAD(+). Its function is as follows. NQR complex catalyzes the reduction of ubiquinone-1 to ubiquinol by two successive reactions, coupled with the transport of Na(+) ions from the cytoplasm to the periplasm. NqrA to NqrE are probably involved in the second step, the conversion of ubisemiquinone to ubiquinol. The chain is Na(+)-translocating NADH-quinone reductase subunit E from Photorhabdus laumondii subsp. laumondii (strain DSM 15139 / CIP 105565 / TT01) (Photorhabdus luminescens subsp. laumondii).